The primary structure comprises 620 residues: tRNA uridine 5-carboxymethylaminomethyl modification enzyme MnmG (620 aa).

Residues 13–18 (GGGHAG), V125, and S182 each bind FAD. Residue 280 to 294 (GPRYCPSVEDKIVKF) participates in NAD(+) binding. N377 serves as a coordination point for FAD.

The protein belongs to the MnmG family. In terms of assembly, homodimer. Heterotetramer of two MnmE and two MnmG subunits. It depends on FAD as a cofactor.

The protein resides in the cytoplasm. In terms of biological role, NAD-binding protein involved in the addition of a carboxymethylaminomethyl (cmnm) group at the wobble position (U34) of certain tRNAs, forming tRNA-cmnm(5)s(2)U34. This Sulfurihydrogenibium sp. (strain YO3AOP1) protein is tRNA uridine 5-carboxymethylaminomethyl modification enzyme MnmG.